A 681-amino-acid polypeptide reads, in one-letter code: MSVNSEKSSSSERPEPQQKAPLVPPPPPPPPPPPLPDPAPPEPEEEILGSDDEEQEDPADYCKGGYHPVKIGDLFNGRYHVIRKLGWGHFSTVWLCWDMQGKRFVAMKVVKSAQHYTETALDEIKLLKCVRESDPSDPNKDMVVQLIDDFKISGMNGIHVCMVFEVLGHHLLKWIIKSNYQGLPVRCVKSIIRQVLQGLDYLHSKCKIIHTDIKPENILMCVDDAYVRRMAAEATEWQKAGAPPPSGSAVSTAPQQKPIGKISKNKKKKLKKKQKRQAELLEKRLQEIEELEREAERKILEENITSAEASGEQDGEYQPEVTLKAADLEDTTEEETAKDNGEVEDQEEKEDAEKENAEKDEDDVEQELANLDPTWVESPKANGHIENGPFSLEQQLEDEEDDEDDCANPEEYNLDEPNAESDYTYSSSYEQFNGELPNGQHKTSEFPTPLFSGPLEPVACGSVISEGSPLTEQEESSPSHDRSRTVSASSTGDLPKTKTRAADLLVNPLDPRNADKIRVKIADLGNACWVHKHFTEDIQTRQYRSIEVLIGAGYSTPADIWSTACMAFELATGDYLFEPHSGEDYSRDEDHIAHIIELLGSIPRHFALSGKYSREFFNRRGELRHITKLKPWSLFDVLVEKYGWPHEDAAQFTDFLIPMLEMVPEKRASAGECLRHPWLNS.

The disordered stretch occupies residues 1 to 63 (MSVNSEKSSS…EQEDPADYCK (63 aa)). Residues 22–41 (LVPPPPPPPPPPPLPDPAPP) are compositionally biased toward pro residues. The span at 42 to 59 (EPEEEILGSDDEEQEDPA) shows a compositional bias: acidic residues. Ser-50 is modified (phosphoserine). Positions 79-681 (YHVIRKLGWG…ECLRHPWLNS (603 aa)) constitute a Protein kinase domain. Residues 85–93 (LGWGHFSTV) and Lys-108 contribute to the ATP site. The Proton acceptor role is filled by Asp-212. Disordered regions lie at residues 237 to 270 (WQKAGAPPPSGSAVSTAPQQKPIGKISKNKKKKL), 302 to 452 (ENIT…PLFS), and 467 to 499 (GSPLTEQEESSPSHDRSRTVSASSTGDLPKTKT). A phosphothreonine mark is found at Thr-331 and Thr-332. At Ser-378 the chain carries Phosphoserine. Positions 395 to 419 (QLEDEEDDEDDCANPEEYNLDEPNA) are enriched in acidic residues. Positions 421 to 431 (SDYTYSSSYEQ) are enriched in polar residues. Phosphoserine is present on Ser-468. Residue Thr-471 is modified to Phosphothreonine. A phosphoserine mark is found at Ser-477, Ser-479, and Ser-483. Thr-485 is subject to Phosphothreonine; by PKB/AKT1. A phosphoserine mark is found at Ser-487 and Ser-490. The residue at position 581 (Ser-581) is a Phosphoserine; by CK2.

It belongs to the protein kinase superfamily. CMGC Ser/Thr protein kinase family. In terms of assembly, associates with U4/U6-U5 tri-small nuclear ribonucleoproteins (U4/U6-U5 tri-snRNPs). Interacts with PKB/AKT1 in a phosphorylation-dependent manner. The phosphorylated form (by PKB/AKT1) interacts with YWHAB and YWHAE. Interaction with YWHAB suppresses its cleavage by caspases and inhibits the release of its N-terminal pro-apoptotic fragment. Interacts with SFN. Interacts with ACIN1. Interacts with POLR2A/RNA polymerase II; the interaction occurs during the co-transcriptional formation of inappropriate R-loops. Requires Mg(2+) as cofactor. Phosphorylation at Thr-485 by PKB/AKT1 enhances its stimulatory activity in triggering cyclin-D1 (CCND1) expression and promoting apoptosis in neurons, which can be blocked by YWHAB. It also enhances its protein kinase activity toward ACIN1 and SRSF2, promotes its nuclear translocation and prevents its proteolytic cleavage. In terms of processing, proteolytically cleaved at Asp-137 and Asp-401 by caspase-3 during apoptotic cell death. Cleavage at Asp-137 which is the major site of cleavage, produces a small N-terminal fragment that translocates into nucleus and promotes VP16-induced apoptosis. In terms of tissue distribution, expressed in testes, lung and brain.

The protein localises to the cytoplasm. The protein resides in the nucleus. Its subcellular location is the nucleoplasm. It localises to the nucleus speckle. It is found in the chromosome. The catalysed reaction is L-seryl-[protein] + ATP = O-phospho-L-seryl-[protein] + ADP + H(+). The enzyme catalyses L-threonyl-[protein] + ATP = O-phospho-L-threonyl-[protein] + ADP + H(+). Its activity is regulated as follows. Activated by phosphorylation on Ser-50 and Ser-581. In terms of biological role, serine/arginine-rich protein-specific kinase which specifically phosphorylates its substrates at serine residues located in regions rich in arginine/serine dipeptides, known as RS domains and is involved in the phosphorylation of SR splicing factors and the regulation of splicing. Promotes neuronal apoptosis by up-regulating cyclin-D1 (CCND1) expression. This is done by the phosphorylation of SRSF2, leading to the suppression of p53/TP53 phosphorylation thereby relieving the repressive effect of p53/TP53 on cyclin-D1 (CCND1) expression. Phosphorylates ACIN1, and redistributes it from the nuclear speckles to the nucleoplasm, resulting in cyclin A1 but not cyclin A2 up-regulation. Plays an essential role in spliceosomal B complex formation via the phosphorylation of DDX23/PRP28. Probably by phosphorylating DDX23, leads to the suppression of incorrect R-loops formed during transcription; R-loops are composed of a DNA:RNA hybrid and the associated non-template single-stranded DNA. This chain is SRSF protein kinase 2, found in Mus musculus (Mouse).